Consider the following 184-residue polypeptide: Ribosome-recycling factor (184 aa).

It belongs to the RRF family.

Its subcellular location is the cytoplasm. Functionally, responsible for the release of ribosomes from messenger RNA at the termination of protein biosynthesis. May increase the efficiency of translation by recycling ribosomes from one round of translation to another. In Stenotrophomonas maltophilia (strain R551-3), this protein is Ribosome-recycling factor.